The chain runs to 181 residues: ADP-ribosylation factor 1 (181 aa).

A lipid anchor (N-myristoyl glycine) is attached at Gly-2. GTP-binding positions include 24–31 (GLDAAGKT), 67–71 (DVGGQ), and 126–129 (NKQD).

The protein belongs to the small GTPase superfamily. Arf family. Interacts with AGD7 and GDAP1. GDP-locked form interacts with cytosolic tail of p24 proteins. Interacts with AGD5 at trans-Golgi network. Interacts with A.tumefaciens AK6b.

It localises to the golgi apparatus. It is found in the endosome. The protein resides in the trans-Golgi network. The protein localises to the early endosome. It catalyses the reaction GTP + H2O = GDP + phosphate + H(+). With respect to regulation, activated by AGD7 and AGD10. Functionally, GTP-binding protein involved in protein trafficking; required for the sequence-specific vacuolar sorting route to the lytic vacuole, for the ER-to-Golgi transport and for the Golgi-derived transport to the plasma membrane. Involved in the recruitment of COPI and GDAP1 to membranes. Required for recycling of PIN auxin transporters (e.g. PIN1 and PIN2) in a fungal toxin brefeldin A (BFA)-dependent manner. Involved in various auxin-dependent developmental processes. The sequence is that of ADP-ribosylation factor 1 from Arabidopsis thaliana (Mouse-ear cress).